The primary structure comprises 1255 residues: DNA-directed RNA polymerase subunit beta' (1255 aa).

Positions 60, 62, 77, and 80 each coordinate Zn(2+). Residues Asp-503, Asp-505, and Asp-507 each coordinate Mg(2+). Positions 875, 950, 957, and 960 each coordinate Zn(2+).

It belongs to the RNA polymerase beta' chain family. The RNAP catalytic core consists of 2 alpha, 1 beta, 1 beta' and 1 omega subunit. When a sigma factor is associated with the core the holoenzyme is formed, which can initiate transcription. Requires Mg(2+) as cofactor. It depends on Zn(2+) as a cofactor.

It carries out the reaction RNA(n) + a ribonucleoside 5'-triphosphate = RNA(n+1) + diphosphate. DNA-dependent RNA polymerase catalyzes the transcription of DNA into RNA using the four ribonucleoside triphosphates as substrates. The protein is DNA-directed RNA polymerase subunit beta' of Mycoplasma capricolum subsp. capricolum (strain California kid / ATCC 27343 / NCTC 10154).